The primary structure comprises 538 residues: MGVVAKNFPIPDLHRVRRVLLSVSDKTGIVAFAQALQTYNVELISTGGTAKVLMAAGLPVRDVAEVTGFPEIMDGRVKTLHPLIHGALLGVREDPSHAVAMEQYGIHGIDLLVVNLYPFEETVQSGADGQTILENIDIGGPAMIRAAAKNHVYTGVITAVSDYDAVLSELKQHDGCLSFSMRQQLAMRAYAHTAAYDTAIAAWFAKNLKIETPSWQSFSGHLKNVMRYGENPHQKAAFYRNGDKRFGVATAKLLQGKALSYNNMNDTDAAFELVAEFDPQNTAAVALIKHANPCGVAEGQTLKEAYLKALLCDNVSAFGGIIALNQPLDAECAEEVIKIFTEVIIAPDATMEAREIISGKKNLRLLLTGGVPDPRCGGFIAKTLAGGILVQSRDNVVVDDLKLQVVTKRAPSQEEMRDLQFAFRVVKHVKSNAIVYAKNSATVGIGAGQMSRVDSAKIAARKAEESAKRAGLTESLTKGSVVASDAFFPFADGLLAVAEAGATAVIQPGGSMRDEEVIAAADAQGLAMVFTGVRHFRH.

Positions 8–158 constitute an MGS-like domain; sequence FPIPDLHRVR…KNHVYTGVIT (151 aa).

The protein belongs to the PurH family.

It catalyses the reaction (6R)-10-formyltetrahydrofolate + 5-amino-1-(5-phospho-beta-D-ribosyl)imidazole-4-carboxamide = 5-formamido-1-(5-phospho-D-ribosyl)imidazole-4-carboxamide + (6S)-5,6,7,8-tetrahydrofolate. It carries out the reaction IMP + H2O = 5-formamido-1-(5-phospho-D-ribosyl)imidazole-4-carboxamide. The protein operates within purine metabolism; IMP biosynthesis via de novo pathway; 5-formamido-1-(5-phospho-D-ribosyl)imidazole-4-carboxamide from 5-amino-1-(5-phospho-D-ribosyl)imidazole-4-carboxamide (10-formyl THF route): step 1/1. Its pathway is purine metabolism; IMP biosynthesis via de novo pathway; IMP from 5-formamido-1-(5-phospho-D-ribosyl)imidazole-4-carboxamide: step 1/1. This is Bifunctional purine biosynthesis protein PurH from Bartonella henselae (strain ATCC 49882 / DSM 28221 / CCUG 30454 / Houston 1) (Rochalimaea henselae).